The primary structure comprises 420 residues: Glycogen synthase kinase-3 beta (420 aa).

The segment covering 1 to 22 (MSGRPRTTSFAESCKPVQQPSA) has biased composition (polar residues). The interval 1–53 (MSGRPRTTSFAESCKPVQQPSAFGSMKVSRDKDGSKVTTVVATPGQGPDRPQE) is disordered. S9 is modified (phosphoserine; by PKB/AKT1, RPS6KA3 and SGK3). C14 carries S-palmitoyl cysteine lipidation. The 285-residue stretch at 56 to 340 (YTDTKVIGNG…PLEACAHSFF (285 aa)) folds into the Protein kinase domain. ATP-binding positions include 62-70 (IGNGSFGVV) and K85. D181 serves as the catalytic Proton acceptor. Y216 is modified (phosphotyrosine). The interval 385–420 (QAAASPPANATAASDTNAGDRGQTNNAASASASNST) is disordered. 2 stretches are compositionally biased toward low complexity: residues 386-401 (AAAS…SDTN) and 409-420 (NNAASASASNST). The residue at position 389 (S389) is a Phosphoserine.

It belongs to the protein kinase superfamily. CMGC Ser/Thr protein kinase family. GSK-3 subfamily. Monomer. Interacts with DAB2IP (via C2 domain); the interaction stimulates GSK3B kinase activation. Interacts (via C2 domain) with PPP2CA. Interacts with ARRB2, AXIN1, CABYR, DISC1, MMP2, MUC1, NIN, PRUNE1 and ZBED3. Interacts with AXIN1; the interaction mediates hyperphosphorylation of CTNNB1 leading to its ubiquitination and destruction. Interacts with and phosphorylates SNAI1. Interacts with DNM1L (via a C-terminal domain). Found in a complex composed of MACF1, APC, AXIN1, CTNNB1 and GSK3B. Interacts with SGK3. Interacts with the CLOCK-BMAL1 heterodimer. Interacts with the BMAL1. Interacts with CTNND2. The complex composed, at least, of APC, CTNNB1 and GSK3B interacts with JPT1; the interaction requires the inactive form of GSK3B (phosphorylated at 'Ser-9'). Forms a complex composed of PRKAR2A or PRKAR2B, GSK3B and GSKIP through GSKIP interaction; facilitates PKA-induced phosphorylation and regulates GSK3B activity. Interacts with GSKIP. Interacts with GID8. Interacts with PIWIL2. Interacts with LMBR1L. Interacts with DDX3X. Interacts with BIRC2. Interacts with TNFRSF10B; TNFRSF10B stimulation inhibits GSK3B kinase activity. Found in a complex with SLC39A6, SLC39A10 and with GSK3B that controls NCAM1 phosphorylation. Interacts with PKP3 (via ARM repeats); the interaction may be involved in PKP3 protein degradation. Phosphorylated by AKT1 and ILK1. Upon insulin-mediated signaling, the activated PKB/AKT1 and RPS6KA3 protein kinases phosphorylate and deactivate GSK3B, resulting in the dephosphorylation and activation of GYS1. Activated by phosphorylation at Tyr-216. Inactivated by phosphorylation at Ser-9. Phosphorylated in a circadian manner in the hippocampus. In terms of processing, mono-ADP-ribosylation by PARP10 negatively regulates kinase activity. Post-translationally, palmitoylated. Palmitoylation by ZDHHC4 prevents AKT1-mediated phosphorylation.

The protein localises to the cytoplasm. It localises to the nucleus. It is found in the membrane. Its subcellular location is the cell membrane. It carries out the reaction L-seryl-[tau protein] + ATP = O-phospho-L-seryl-[tau protein] + ADP + H(+). The catalysed reaction is L-threonyl-[tau protein] + ATP = O-phospho-L-threonyl-[tau protein] + ADP + H(+). It catalyses the reaction L-seryl-[protein] + ATP = O-phospho-L-seryl-[protein] + ADP + H(+). The enzyme catalyses L-threonyl-[protein] + ATP = O-phospho-L-threonyl-[protein] + ADP + H(+). Its activity is regulated as follows. Activated by phosphorylation at Tyr-216. In response to insulin, inhibited by phosphorylation at Ser-9 by PKB/AKT1; phosphorylation at this site causes a conformational change, preventing access of substrates to the active site. Inhibited by IL22 treatment which also triggers phosphorylation at Ser-9, promoting inactivation. Inhibited by lithium. Functionally, constitutively active protein kinase that acts as a negative regulator in the hormonal control of glucose homeostasis, Wnt signaling and regulation of transcription factors and microtubules, by phosphorylating and inactivating glycogen synthase (GYS1 or GYS2), EIF2B, CTNNB1/beta-catenin, APC, AXIN1, DPYSL2/CRMP2, JUN, NFATC1/NFATC, MAPT/TAU and MACF1. Requires primed phosphorylation of the majority of its substrates. In skeletal muscle, contributes to insulin regulation of glycogen synthesis by phosphorylating and inhibiting GYS1 activity and hence glycogen synthesis. May also mediate the development of insulin resistance by regulating activation of transcription factors. Regulates protein synthesis by controlling the activity of initiation factor 2B (EIF2BE/EIF2B5) in the same manner as glycogen synthase. In Wnt signaling, GSK3B forms a multimeric complex with APC, AXIN1 and CTNNB1/beta-catenin and phosphorylates the N-terminus of CTNNB1 leading to its degradation mediated by ubiquitin/proteasomes. Phosphorylates JUN at sites proximal to its DNA-binding domain, thereby reducing its affinity for DNA. Phosphorylates NFATC1/NFATC on conserved serine residues promoting NFATC1/NFATC nuclear export, shutting off NFATC1/NFATC gene regulation, and thereby opposing the action of calcineurin. Phosphorylates MAPT/TAU on 'Thr-548', decreasing significantly MAPT/TAU ability to bind and stabilize microtubules. MAPT/TAU is the principal component of neurofibrillary tangles in Alzheimer disease. Plays an important role in ERBB2-dependent stabilization of microtubules at the cell cortex. Phosphorylates MACF1, inhibiting its binding to microtubules which is critical for its role in bulge stem cell migration and skin wound repair. Probably regulates NF-kappa-B (NFKB1) at the transcriptional level and is required for the NF-kappa-B-mediated anti-apoptotic response to TNF-alpha (TNF/TNFA). Negatively regulates replication in pancreatic beta-cells, resulting in apoptosis, loss of beta-cells and diabetes. Through phosphorylation of the anti-apoptotic protein MCL1, may control cell apoptosis in response to growth factors deprivation. Phosphorylates MUC1 in breast cancer cells, decreasing the interaction of MUC1 with CTNNB1/beta-catenin. Is necessary for the establishment of neuronal polarity and axon outgrowth. Phosphorylates MARK2, leading to inhibition of its activity. Phosphorylates SIK1 at 'Thr-182', leading to sustainment of its activity. Phosphorylates ZC3HAV1 which enhances its antiviral activity. Phosphorylates SNAI1, leading to its ubiquitination and proteasomal degradation. Phosphorylates SFPQ at 'Thr-687' upon T-cell activation. Phosphorylates NR1D1 st 'Ser-55' and 'Ser-59' and stabilizes it by protecting it from proteasomal degradation. Regulates the circadian clock via phosphorylation of the major clock components including BMAL1, CLOCK and PER2. Phosphorylates CLOCK AT 'Ser-427' and targets it for proteasomal degradation. Phosphorylates BMAL1 at 'Ser-17' and 'Ser-21' and primes it for ubiquitination and proteasomal degradation. Phosphorylates FBXL2 at 'Thr-404' and primes it for ubiquitination by the SCF(FBXO3) complex and proteasomal degradation. Phosphorylates OGT at 'Ser-3' or 'Ser-4' which positively regulates its activity. Phosphorylates MYCN in neuroblastoma cells which may promote its degradation. Regulates the circadian rhythmicity of hippocampal long-term potentiation and BMAL1 and PER2 expression. Acts as a regulator of autophagy by mediating phosphorylation of KAT5/TIP60 under starvation conditions, activating KAT5/TIP60 acetyltransferase activity and promoting acetylation of key autophagy regulators, such as ULK1 and RUBCNL/Pacer. Negatively regulates extrinsic apoptotic signaling pathway via death domain receptors. Promotes the formation of an anti-apoptotic complex, made of DDX3X, BRIC2 and GSK3B, at death receptors, including TNFRSF10B. The anti-apoptotic function is most effective with weak apoptotic signals and can be overcome by stronger stimulation. Phosphorylates E2F1, promoting the interaction between E2F1 and USP11, stabilizing E2F1 and promoting its activity. Phosphorylates mTORC2 complex component RICTOR at 'Ser-1235' in response to endoplasmic stress, inhibiting mTORC2. Phosphorylates FXR1, promoting FXR1 ubiquitination by the SCF(FBXO4) complex and FXR1 degradation by the proteasome. Phosphorylates interleukin-22 receptor subunit IL22RA1, preventing its proteasomal degradation. This chain is Glycogen synthase kinase-3 beta, found in Rattus norvegicus (Rat).